A 104-amino-acid polypeptide reads, in one-letter code: UPF0213 protein plu4503 (104 aa).

In terms of domain architecture, GIY-YIG spans 4–79 (NQWVLYLLKT…KQLSKQQKER (76 aa)).

The protein belongs to the UPF0213 family.

This is UPF0213 protein plu4503 from Photorhabdus laumondii subsp. laumondii (strain DSM 15139 / CIP 105565 / TT01) (Photorhabdus luminescens subsp. laumondii).